The following is a 325-amino-acid chain: ATP phosphoribosyltransferase (325 aa).

This sequence belongs to the ATP phosphoribosyltransferase family. Long subfamily. Mg(2+) is required as a cofactor.

It is found in the cytoplasm. The enzyme catalyses 1-(5-phospho-beta-D-ribosyl)-ATP + diphosphate = 5-phospho-alpha-D-ribose 1-diphosphate + ATP. The protein operates within amino-acid biosynthesis; L-histidine biosynthesis; L-histidine from 5-phospho-alpha-D-ribose 1-diphosphate: step 1/9. With respect to regulation, feedback inhibited by histidine. Catalyzes the condensation of ATP and 5-phosphoribose 1-diphosphate to form N'-(5'-phosphoribosyl)-ATP (PR-ATP). Has a crucial role in the pathway because the rate of histidine biosynthesis seems to be controlled primarily by regulation of HisG enzymatic activity. This is ATP phosphoribosyltransferase from Nitrobacter hamburgensis (strain DSM 10229 / NCIMB 13809 / X14).